The chain runs to 261 residues: Cytochrome c oxidase subunit 3 (261 aa).

Over 1-15 (MTHQTHAYHMVNPSP) the chain is Mitochondrial matrix. The helical transmembrane segment at 16 to 34 (WPLTGALSALLMTSGLTMW) threads the bilayer. The Mitochondrial intermembrane segment spans residues 35–40 (FHFNSM). The helical transmembrane segment at 41–66 (TLLTLGLTTNMLTMYQWWRDIIREST) threads the bilayer. Residues 67-72 (FQGHHT) lie on the Mitochondrial matrix side of the membrane. The chain crosses the membrane as a helical span at residues 73–105 (PNVQKGLRYGMILFIISEVLFFTGFFWAFYHSS). Residues 106–128 (LAPTPELGGCWPPTGIHPLNPLE) are Mitochondrial intermembrane-facing. The chain crosses the membrane as a helical span at residues 129 to 152 (VPLLNTSVLLASGVSITWAHHSLM). The Mitochondrial matrix segment spans residues 153-155 (EGN). Residues 156 to 183 (RNHMLQALFITISLGVYFTLLQASEYYE) traverse the membrane as a helical segment. The Mitochondrial intermembrane segment spans residues 184-190 (APFTISD). The chain crosses the membrane as a helical span at residues 191-223 (GVYGSTFFVATGFHGLHVIIGSTFLIVCFFRQL). Residues 224-232 (KFHFTSNHH) lie on the Mitochondrial matrix side of the membrane. Residues 233-256 (FGFEAAAWYWHFVDVVWLFLYVSI) form a helical membrane-spanning segment. The Mitochondrial intermembrane segment spans residues 257-261 (YWWGS).

The protein belongs to the cytochrome c oxidase subunit 3 family. In terms of assembly, component of the cytochrome c oxidase (complex IV, CIV), a multisubunit enzyme composed of 14 subunits. The complex is composed of a catalytic core of 3 subunits MT-CO1, MT-CO2 and MT-CO3, encoded in the mitochondrial DNA, and 11 supernumerary subunits COX4I, COX5A, COX5B, COX6A, COX6B, COX6C, COX7A, COX7B, COX7C, COX8 and NDUFA4, which are encoded in the nuclear genome. The complex exists as a monomer or a dimer and forms supercomplexes (SCs) in the inner mitochondrial membrane with NADH-ubiquinone oxidoreductase (complex I, CI) and ubiquinol-cytochrome c oxidoreductase (cytochrome b-c1 complex, complex III, CIII), resulting in different assemblies (supercomplex SCI(1)III(2)IV(1) and megacomplex MCI(2)III(2)IV(2)).

It is found in the mitochondrion inner membrane. The catalysed reaction is 4 Fe(II)-[cytochrome c] + O2 + 8 H(+)(in) = 4 Fe(III)-[cytochrome c] + 2 H2O + 4 H(+)(out). Component of the cytochrome c oxidase, the last enzyme in the mitochondrial electron transport chain which drives oxidative phosphorylation. The respiratory chain contains 3 multisubunit complexes succinate dehydrogenase (complex II, CII), ubiquinol-cytochrome c oxidoreductase (cytochrome b-c1 complex, complex III, CIII) and cytochrome c oxidase (complex IV, CIV), that cooperate to transfer electrons derived from NADH and succinate to molecular oxygen, creating an electrochemical gradient over the inner membrane that drives transmembrane transport and the ATP synthase. Cytochrome c oxidase is the component of the respiratory chain that catalyzes the reduction of oxygen to water. Electrons originating from reduced cytochrome c in the intermembrane space (IMS) are transferred via the dinuclear copper A center (CU(A)) of subunit 2 and heme A of subunit 1 to the active site in subunit 1, a binuclear center (BNC) formed by heme A3 and copper B (CU(B)). The BNC reduces molecular oxygen to 2 water molecules using 4 electrons from cytochrome c in the IMS and 4 protons from the mitochondrial matrix. In Antidorcas marsupialis (Springbok), this protein is Cytochrome c oxidase subunit 3 (MT-CO3).